A 974-amino-acid polypeptide reads, in one-letter code: Ovochymase-2 (974 aa).

Residues 1-21 (MAETSIFPIMMLTVMIGVGRG) form the signal peptide. The propeptide at 22–49 (VTDSPGRVSRCGERPAANTSVSYGLLSR) is activation peptide. An N-linked (GlcNAc...) asparagine glycan is attached at Asn39. The 250-residue stretch at 50-299 (IVGGTSAVKG…LLNWLSENLN (250 aa)) folds into the Peptidase S1 1 domain. An intrachain disulfide couples Cys75 to Cys91. His90 functions as the Charge relay system in the catalytic mechanism. Residues Val112 and Glu117 each coordinate Ca(2+). The active-site Charge relay system is the Asp140. 11 disulfides stabilise this stretch: Cys174–Cys244, Cys205–Cys223, Cys234–Cys263, Cys312–Cys342, Cys369–Cys388, Cys435–Cys462, Cys489–Cys510, Cys615–Cys631, Cys713–Cys776, Cys741–Cys754, and Cys766–Cys795. Ser238 (charge relay system) is an active-site residue. CUB domains follow at residues 312 to 425 (CSTN…YEAV) and 435 to 547 (CGSV…ISFV). In terms of domain architecture, Peptidase S1 2 spans 590-819 (LIKAEEAMPN…FIPWIMETIL (230 aa)). Positions 590-974 (LIKAEEAMPN…WLSYSFHNQN (385 aa)) are cleaved as a propeptide — activation peptide. An N-linked (GlcNAc...) asparagine glycan is attached at Asn763. The interval 830–858 (EPHHPLFPPDKPSQQKALLPDSPPSSSSQ) is disordered. Residue Asn926 is glycosylated (N-linked (GlcNAc...) asparagine).

The protein belongs to the peptidase S1 family. In terms of processing, the catalytically inactive 107 kDa form is processed both N- and C-terminally to give rise to the 66 kDa catalytically active form and inactive forms of 82 kDa and 59 kDa. Expressed specifically in the cells lining the bottom of epithelial folds in the oviductal pars recta.

The protein resides in the secreted. It carries out the reaction Preferential cleavage at 371-Gly-Ser-Arg-|-Trp-374 of glycoprotein gp43 in Xenopus laevis coelemic egg envelope to yield gp41.. Its function is as follows. Mediates gamete interaction by affecting the vitelline coat. This Bufo japonicus (Japanese common toad) protein is Ovochymase-2 (OVCH2).